The primary structure comprises 311 residues: Fucose-specific lectin (311 aa).

Repeat copies occupy residues 1 to 53, 54 to 103, 104 to 151, 152 to 209, 210 to 256, and 257 to 311. The tract at residues 1–311 is 6 X approximate tandem repeats; that stretch reads MSTPGAQEVL…LGRRALPPAE (311 aa). Beta-L-fucose contacts are provided by Arg-25, Glu-37, Trp-44, Arg-73, Glu-85, Trp-94, Arg-126, Glu-138, Trp-146, Arg-177, Gln-189, Trp-198, Arg-230, Gln-242, Arg-277, and Glu-291.

This sequence belongs to the fungal fucose-specific lectin family. Homodimer.

Functionally, lectin that specifically binds to L-fucose and weakly reacts with mannose and N-acetyl-neuraminic acid. Has strongest preference for the alpha-1,6-fucosylated chain (core fucose) on glycoproteins among alpha-1,2-, alpha-1,3-, alpha-1,4-, and alpha-1,6-fucosylated chains. Binds to fucose residues of IgE in mice and human, causing antigen-independent IgE-mediated mast cell activation and anaphylactoid reactions in mice and is possibly implicated in allergic response to Aspergillus oryzae in humans. Induces secretion of pro-inflammatory cytokines IL6 and IL8 implicated in ocular diseases such as mycotic keratitis, probably through its interaction with host toll-like receptors TLR2 and TLR4, followed by up-regulation of pro-inflammatory cytokines. This chain is Fucose-specific lectin, found in Aspergillus oryzae (strain ATCC 42149 / RIB 40) (Yellow koji mold).